Here is a 277-residue protein sequence, read N- to C-terminus: 3-methyl-2-oxobutanoate hydroxymethyltransferase (277 aa).

Asp42 and Asp81 together coordinate Mg(2+). 3-methyl-2-oxobutanoate-binding positions include 42-43 (DS), Asp81, and Lys110. Position 112 (Glu112) interacts with Mg(2+). The active-site Proton acceptor is the Glu179.

This sequence belongs to the PanB family. As to quaternary structure, homodecamer; pentamer of dimers. It depends on Mg(2+) as a cofactor.

It is found in the cytoplasm. The catalysed reaction is 3-methyl-2-oxobutanoate + (6R)-5,10-methylene-5,6,7,8-tetrahydrofolate + H2O = 2-dehydropantoate + (6S)-5,6,7,8-tetrahydrofolate. The protein operates within cofactor biosynthesis; (R)-pantothenate biosynthesis; (R)-pantoate from 3-methyl-2-oxobutanoate: step 1/2. Its function is as follows. Catalyzes the reversible reaction in which hydroxymethyl group from 5,10-methylenetetrahydrofolate is transferred onto alpha-ketoisovalerate to form ketopantoate. In Anaplasma marginale (strain Florida), this protein is 3-methyl-2-oxobutanoate hydroxymethyltransferase.